The following is a 701-amino-acid chain: Elongation factor G (701 aa).

Residues 8 to 290 (ERYRNIGISA…AVVDYLPAPT (283 aa)) enclose the tr-type G domain. Residues 17 to 24 (AHIDAGKT), 88 to 92 (DTPGH), and 142 to 145 (NKMD) contribute to the GTP site.

The protein belongs to the TRAFAC class translation factor GTPase superfamily. Classic translation factor GTPase family. EF-G/EF-2 subfamily.

The protein localises to the cytoplasm. Catalyzes the GTP-dependent ribosomal translocation step during translation elongation. During this step, the ribosome changes from the pre-translocational (PRE) to the post-translocational (POST) state as the newly formed A-site-bound peptidyl-tRNA and P-site-bound deacylated tRNA move to the P and E sites, respectively. Catalyzes the coordinated movement of the two tRNA molecules, the mRNA and conformational changes in the ribosome. The chain is Elongation factor G from Aeromonas salmonicida (strain A449).